Reading from the N-terminus, the 293-residue chain is Acetyl-coenzyme A carboxylase carboxyl transferase subunit beta (293 aa).

The CoA carboxyltransferase N-terminal domain occupies 29-293 (LWSKCPECGL…GCRPMEITSA (265 aa)). Zn(2+) contacts are provided by C33, C36, C52, and C55. The segment at 33 to 55 (CPECGLVVYVKDLKGNASVCAGC) adopts a C4-type zinc-finger fold.

The protein belongs to the AccD/PCCB family. In terms of assembly, acetyl-CoA carboxylase is a heterohexamer composed of biotin carboxyl carrier protein (AccB), biotin carboxylase (AccC) and two subunits each of ACCase subunit alpha (AccA) and ACCase subunit beta (AccD). It depends on Zn(2+) as a cofactor.

The protein localises to the cytoplasm. It catalyses the reaction N(6)-carboxybiotinyl-L-lysyl-[protein] + acetyl-CoA = N(6)-biotinyl-L-lysyl-[protein] + malonyl-CoA. It functions in the pathway lipid metabolism; malonyl-CoA biosynthesis; malonyl-CoA from acetyl-CoA: step 1/1. In terms of biological role, component of the acetyl coenzyme A carboxylase (ACC) complex. Biotin carboxylase (BC) catalyzes the carboxylation of biotin on its carrier protein (BCCP) and then the CO(2) group is transferred by the transcarboxylase to acetyl-CoA to form malonyl-CoA. The protein is Acetyl-coenzyme A carboxylase carboxyl transferase subunit beta of Parasynechococcus marenigrum (strain WH8102).